The following is a 211-amino-acid chain: uncharacterized protein (211 aa).

This is an uncharacterized protein from Lactuca sativa (Garden lettuce).